Consider the following 252-residue polypeptide: Imidazole glycerol phosphate synthase subunit HisF (252 aa).

Residues Asp11 and Asp130 contribute to the active site.

This sequence belongs to the HisA/HisF family. In terms of assembly, heterodimer of HisH and HisF.

It localises to the cytoplasm. The catalysed reaction is 5-[(5-phospho-1-deoxy-D-ribulos-1-ylimino)methylamino]-1-(5-phospho-beta-D-ribosyl)imidazole-4-carboxamide + L-glutamine = D-erythro-1-(imidazol-4-yl)glycerol 3-phosphate + 5-amino-1-(5-phospho-beta-D-ribosyl)imidazole-4-carboxamide + L-glutamate + H(+). Its pathway is amino-acid biosynthesis; L-histidine biosynthesis; L-histidine from 5-phospho-alpha-D-ribose 1-diphosphate: step 5/9. IGPS catalyzes the conversion of PRFAR and glutamine to IGP, AICAR and glutamate. The HisF subunit catalyzes the cyclization activity that produces IGP and AICAR from PRFAR using the ammonia provided by the HisH subunit. This chain is Imidazole glycerol phosphate synthase subunit HisF, found in Staphylococcus epidermidis (strain ATCC 12228 / FDA PCI 1200).